The chain runs to 62 residues: Small ribosomal subunit protein eS27 (62 aa).

Zn(2+) is bound by residues Cys-17, Cys-20, Cys-36, and Cys-39. A C4-type zinc finger spans residues 17–39 (CNDCENEQIIFGSASRKITCVVC).

This sequence belongs to the eukaryotic ribosomal protein eS27 family. Part of the 30S ribosomal subunit. Requires Zn(2+) as cofactor.

The polypeptide is Small ribosomal subunit protein eS27 (Methanosarcina mazei (strain ATCC BAA-159 / DSM 3647 / Goe1 / Go1 / JCM 11833 / OCM 88) (Methanosarcina frisia)).